The chain runs to 162 residues: uncharacterized protein (162 aa).

The N-terminal stretch at 1–24 (MKRGVATLPVILVILLSVAAGAGA) is a signal peptide.

This is an uncharacterized protein from Mycobacterium bovis (strain ATCC BAA-935 / AF2122/97).